An 83-amino-acid chain; its full sequence is Mitochondrial import inner membrane translocase subunit Tim8 B (83 aa).

At alanine 2 the chain carries N-acetylalanine. A Twin CX3C motif motif is present at residues 36-59 (CWDKCVEKPGSRLDSRTENCLSSC). 2 disulfide bridges follow: cysteine 36-cysteine 59 and cysteine 40-cysteine 55.

This sequence belongs to the small Tim family. In terms of assembly, heterohexamer; possibly composed of 3 copies of TIMM8B and 3 copies of TIMM13, named soluble 70 kDa complex. Associates with the TIM22 complex, whose core is composed of TIMM22.

It is found in the mitochondrion inner membrane. Its function is as follows. Probable mitochondrial intermembrane chaperone that participates in the import and insertion of some multi-pass transmembrane proteins into the mitochondrial inner membrane. Also required for the transfer of beta-barrel precursors from the TOM complex to the sorting and assembly machinery (SAM complex) of the outer membrane. Acts as a chaperone-like protein that protects the hydrophobic precursors from aggregation and guide them through the mitochondrial intermembrane space. The chain is Mitochondrial import inner membrane translocase subunit Tim8 B (Timm8b) from Mus musculus (Mouse).